The chain runs to 142 residues: Large ribosomal subunit protein uL13 (142 aa).

Belongs to the universal ribosomal protein uL13 family. As to quaternary structure, part of the 50S ribosomal subunit.

Its function is as follows. This protein is one of the early assembly proteins of the 50S ribosomal subunit, although it is not seen to bind rRNA by itself. It is important during the early stages of 50S assembly. This is Large ribosomal subunit protein uL13 from Shewanella baltica (strain OS223).